The sequence spans 235 residues: MNKMSHSEEFAAGEMNAIRASVWQLLSSLYAKELSRERICELAGAELWQAFAAQVELQASASQIQAALAHAAKYDASQGGDDARLELAADFCSAFLQNAEHCAAPYASLYLGDAGKTERNETASYDTESQDKAARSLYGEKHQLMSDYLRSAGLGLDADFREPSDHLAVILGLMAHLCTSATEESQRAFLESAILSWLPEFNARLGKLKLESPLYGALGDFTLAWARLDTELLGG.

The protein belongs to the TorD/DmsD family. TorD subfamily.

It is found in the cytoplasm. Its function is as follows. Involved in the biogenesis of TorA. Acts on TorA before the insertion of the molybdenum cofactor and, as a result, probably favors a conformation of the apoenzyme that is competent for acquiring the cofactor. The chain is Chaperone protein TorD from Shewanella amazonensis (strain ATCC BAA-1098 / SB2B).